A 171-amino-acid chain; its full sequence is UPF0398 protein M6_Spy1399 (171 aa).

It belongs to the UPF0398 family.

This is UPF0398 protein M6_Spy1399 from Streptococcus pyogenes serotype M6 (strain ATCC BAA-946 / MGAS10394).